The primary structure comprises 959 residues: Bifunctional premutilin synthase (959 aa).

The tract at residues 1–542 (MGLSEDLHAR…ALNVPIPRFD (542 aa)) is class II diterpene cyclase. The DXDD motif signature appears at 309-312 (DADM). The For class II diterpene cyclase activity role is filled by Asp311. The segment at 543-959 (PSSISTLPAI…TANGSNGIHH (417 aa)) is class I diterpene synthase. Residue Asp649 is the For class I diterpene synthase activity of the active site. Mg(2+) is bound by residues Asp649, Asp653, and Asn824. Positions 649 to 653 (DDYLD) match the DDXXD motif motif. Residues 931–959 (KGTNGVKKINGSSTNGTKVTANGSNGIHH) are disordered. Over residues 940-959 (NGSSTNGTKVTANGSNGIHH) the composition is skewed to polar residues.

Belongs to the terpene synthase family. Mg(2+) serves as cofactor.

Its pathway is secondary metabolite biosynthesis; terpenoid biosynthesis. Functionally, bifunctional premutilin synthase; part of the gene cluster that mediates the biosynthesis of pleuromutilin, a tricyclic diterpene showing antibacterial properties. The geranylgeranyl diphosphate (GGPP) synthase catalyzes the first step in pleuromutilin biosynthesis. GGPP is then substrate of the premutilin synthase (PS) to yield premutilin. Premutilin synthase is a bifunctional enzyme composed of the fusion of a class II diterpene cyclase (DTC) and a class I diterpene synthase (DTS), with the corresponding domains and active sites containing characteristic aspartate-rich motifs. GGPP is first converted to mutildienyl-diphosphate (MPP) at the class II DTC site. MPP is subsequently further cyclized at the class I DTS site, followed by a 1,5-hydride shift and addition of water prior to terminating deprotonation, to yield premutilin. In addition to the aforementioned GGPP synthase and bifunctional diterpene synthase, the cluster also contains three cytochrome P450 monooxygenases, a short-chain alcohol dehydrogenase, and an acyltransferase, involved in the conversion of premutilin to pleuromutilin. The cytochrome P450 monooxygenases P450-1 and P450-2 hydroxylate premutilin at C-11 and C-3, respectively, producing 11-hydroxypremutilin and 3-hydroxypremutilin. The combination of the actions of both ple5 and ple6 leads to the production of 3,11-dihydroxypremutilin. The short chain dehydrogenase SDR further converts 3,11-dihydroxypremutilin into mutilin. The acetyltransferase ATF then acetylates mutilin to produce 14-O-acetylmutilin. Finally, the cytochrome P450 monooxygenase P450-3 catalyzes hydroxylation on the alpha position of the acetyl side chain of 14-O-acetylmutilin to yield pleuromutilin. This is Bifunctional premutilin synthase from Clitopilus passeckerianus (Pleurotus passeckerianus).